Here is a 260-residue protein sequence, read N- to C-terminus: Fructose import ATP-binding protein FrcA (260 aa).

Residues 7-251 enclose the ABC transporter domain; that stretch reads LTARGLVKRY…DAVAFMTGAK (245 aa). 39–46 is a binding site for ATP; the sequence is GDNGAGKS.

The protein belongs to the ABC transporter superfamily. The complex is composed of two ATP-binding proteins (FrcA), two transmembrane proteins (FrcC) and a solute-binding protein (FrcB).

Its subcellular location is the cell inner membrane. The catalysed reaction is D-fructose(out) + ATP + H2O = D-fructose(in) + ADP + phosphate + H(+). In terms of biological role, part of the high-affinity ABC transporter complex FrcBCA involved in fructose uptake. Is also a high-affinity transporter for ribose and mannose. Responsible for energy coupling to the transport system. This Rhizobium meliloti (Ensifer meliloti) protein is Fructose import ATP-binding protein FrcA.